A 273-amino-acid chain; its full sequence is Dermonecrotic toxin LarSicTox-alphaVII1 (273 aa).

His5 is a catalytic residue. Mg(2+)-binding residues include Glu25 and Asp27. The active-site Nucleophile is His41. 2 disulfides stabilise this stretch: Cys45/Cys51 and Cys47/Cys192. Asp85 lines the Mg(2+) pocket.

It belongs to the arthropod phospholipase D family. Class II subfamily. Mg(2+) serves as cofactor. As to expression, expressed by the venom gland.

It is found in the secreted. The catalysed reaction is an N-(acyl)-sphingosylphosphocholine = an N-(acyl)-sphingosyl-1,3-cyclic phosphate + choline. It carries out the reaction an N-(acyl)-sphingosylphosphoethanolamine = an N-(acyl)-sphingosyl-1,3-cyclic phosphate + ethanolamine. The enzyme catalyses a 1-acyl-sn-glycero-3-phosphocholine = a 1-acyl-sn-glycero-2,3-cyclic phosphate + choline. It catalyses the reaction a 1-acyl-sn-glycero-3-phosphoethanolamine = a 1-acyl-sn-glycero-2,3-cyclic phosphate + ethanolamine. Its function is as follows. Dermonecrotic toxins cleave the phosphodiester linkage between the phosphate and headgroup of certain phospholipids (sphingolipid and lysolipid substrates), forming an alcohol (often choline) and a cyclic phosphate. This toxin acts on sphingomyelin (SM). It may also act on ceramide phosphoethanolamine (CPE), lysophosphatidylcholine (LPC) and lysophosphatidylethanolamine (LPE), but not on lysophosphatidylserine (LPS), and lysophosphatidylglycerol (LPG). It acts by transphosphatidylation, releasing exclusively cyclic phosphate products as second products. Induces dermonecrosis, hemolysis, increased vascular permeability, edema, inflammatory response, and platelet aggregation. This is Dermonecrotic toxin LarSicTox-alphaVII1 from Loxosceles arizonica (Arizona brown spider).